A 156-amino-acid polypeptide reads, in one-letter code: Ribosomal RNA large subunit methyltransferase H (156 aa).

S-adenosyl-L-methionine is bound by residues leucine 73, glycine 104, and 123-128 (LSDLTL).

Belongs to the RNA methyltransferase RlmH family. Homodimer.

It localises to the cytoplasm. It catalyses the reaction pseudouridine(1915) in 23S rRNA + S-adenosyl-L-methionine = N(3)-methylpseudouridine(1915) in 23S rRNA + S-adenosyl-L-homocysteine + H(+). Its function is as follows. Specifically methylates the pseudouridine at position 1915 (m3Psi1915) in 23S rRNA. The polypeptide is Ribosomal RNA large subunit methyltransferase H (Leptothrix cholodnii (strain ATCC 51168 / LMG 8142 / SP-6) (Leptothrix discophora (strain SP-6))).